Reading from the N-terminus, the 458-residue chain is UDP-N-acetylmuramoylalanine--D-glutamate ligase (458 aa).

ATP is bound at residue 124–130 (GSDGKTT).

The protein belongs to the MurCDEF family.

It localises to the cytoplasm. It carries out the reaction UDP-N-acetyl-alpha-D-muramoyl-L-alanine + D-glutamate + ATP = UDP-N-acetyl-alpha-D-muramoyl-L-alanyl-D-glutamate + ADP + phosphate + H(+). The protein operates within cell wall biogenesis; peptidoglycan biosynthesis. Its function is as follows. Cell wall formation. Catalyzes the addition of glutamate to the nucleotide precursor UDP-N-acetylmuramoyl-L-alanine (UMA). The sequence is that of UDP-N-acetylmuramoylalanine--D-glutamate ligase from Clostridium botulinum (strain 657 / Type Ba4).